Consider the following 245-residue polypeptide: Caffeoyl-CoA O-methyltransferase (245 aa).

Lys19 contributes to the substrate binding site. S-adenosyl-L-methionine is bound by residues Thr61, Glu83, 85 to 86 (GV), Ser91, Asp109, and Ala138. Asp161 is a binding site for substrate. An a divalent metal cation-binding site is contributed by Asp161. An S-adenosyl-L-methionine-binding site is contributed by Asp163. Residues Asp187 and Asn188 each contribute to the a divalent metal cation site. Asn192 serves as a coordination point for substrate.

Belongs to the class I-like SAM-binding methyltransferase superfamily. Cation-dependent O-methyltransferase family. CCoAMT subfamily. Requires a divalent metal cation as cofactor.

The enzyme catalyses (E)-caffeoyl-CoA + S-adenosyl-L-methionine = (E)-feruloyl-CoA + S-adenosyl-L-homocysteine + H(+). Its pathway is aromatic compound metabolism; phenylpropanoid biosynthesis. Functionally, methylates caffeoyl-CoA to feruloyl-CoA and 5-hydroxyferuloyl-CoA to sinapoyl-CoA. Plays a role in the synthesis of feruloylated polysaccharides. Involved in the reinforcement of the plant cell wall. Also involved in the responding to wounding or pathogen challenge by the increased formation of cell wall-bound ferulic acid polymers. The sequence is that of Caffeoyl-CoA O-methyltransferase (CCOAOMT) from Zinnia elegans (Garden zinnia).